Consider the following 262-residue polypeptide: MATASLVPTSKIFSVSPKSSASIKARSRVVVASSQQQQQPRRRELLLKSAVAIPAILQLKEAPISAAREVEVGSYLPLSPSDPSFVLFKAKPSDTPALRAGNVQPYQFVLPPNWKQLRIANILSGNYCQPKCAEPWIEVKFENEKQGKVQVVASPLIRLTNKPNATIEDLGEPEKVIASLGPFVTGNSYDSDELLKTSIEKIGDQTYYKYVLETPFALTGSHNLAKATAKGSTVVLFVVSATEKQWQSSQKTLEAILDSFQL.

The cysteines at positions 128 and 132 are disulfide-linked.

The protein belongs to the PsbP family.

The protein resides in the plastid. It is found in the chloroplast thylakoid lumen. In terms of biological role, may be involved in the redox regulation of photosystem II. This chain is PsbP domain-containing protein 6, chloroplastic (PPD6), found in Arabidopsis thaliana (Mouse-ear cress).